A 676-amino-acid chain; its full sequence is Palmitoyl-CoA ligase FUM16 (676 aa).

Position 245–256 (245–256) interacts with AMP; it reads IMYTSGSTGLPN. The tract at residues 552–655 is AMP-binding; that stretch reads KLESIYRTSQ…SGLVTPTMKL (104 aa).

The protein belongs to the ATP-dependent AMP-binding enzyme family.

It is found in the endoplasmic reticulum. It functions in the pathway mycotoxin biosynthesis. In terms of biological role, palmitoyl-CoA ligase; part of the gene cluster that mediates the biosynthesis of fumonisins B1 (FB1), B2 (FB2), B3 (FB3), and B4 (FB4), which are carcinogenic mycotoxins. Plays a role in the synthesis of ceramide and is involved in self-protection from fumonisin B1 toxicity. The biosynthesis starts with the FUM1-catalyzed carbon chain assembly from one molecule of acetyl-CoA, eight molecules of malonyl-CoA, and two molecules of methionine (in S-adenosyl form). The C18 polyketide chain is released from the enzyme by a nucleophilic attack of a carbanion, which is derived from R-carbon of alanine by decarboxylation, on the carbonyl carbon of polyketide acyl chain. This step is catalyzed by the pyridoxal 5'-phosphate-dependent aminoacyl transferase FUM8. The resultant 3-keto intermediate is then stereospecifically reduced to a 3-hydroxyl product by reductase FUM13. Subsequent oxidations at C-10 by the cytochrome P450 monooxygenase FUM2, C-14 and C-15 by FUM6, FUM12 or FUM15, tricarballylic esterification of the hydroxyl groups on C-14 and C-15 by acyltransferase FUM14, and C-5 hydroxylation by 2-keto-glutarate-dependent dioxygenase FUM3 furnish the biosynthesis of fumonisins. The tricarballylic moieties are most likely derived from the citric acid cycle, and their addition to the carbon backbone may involve FUM7, FUM10, FUM11 and FUM14. The polypeptide is Palmitoyl-CoA ligase FUM16 (Gibberella moniliformis (strain M3125 / FGSC 7600) (Maize ear and stalk rot fungus)).